Here is a 566-residue protein sequence, read N- to C-terminus: E3 ubiquitin-protein ligase RNF220 (566 aa).

Lysine 277 is covalently cross-linked (Glycyl lysine isopeptide (Lys-Gly) (interchain with G-Cter in SUMO2)). The disordered stretch occupies residues 277–297 (KREGESPTASPHSSATDDLHH). A Phosphoserine modification is found at serine 390. A coiled-coil region spans residues 485–513 (EDSAVTTFEALKARVRELERQLSRGDRYK). Residues 514–522 (CLICMDSYS) form a required for targeting to the cytoplasm region. The RING-type zinc-finger motif lies at 514–553 (CLICMDSYSMPLTSIQCWHVHCEECWLRTLGAKKLCPQCN).

As to quaternary structure, interacts with SIN3B. Interacts with CTNNB1 (via Armadillo repeats 2-8). Interacts with USP7 (via MATH domain). Auto-ubiquitinated; leads to proteasomal degradation.

It localises to the cytoplasm. The protein localises to the nucleus. The catalysed reaction is S-ubiquitinyl-[E2 ubiquitin-conjugating enzyme]-L-cysteine + [acceptor protein]-L-lysine = [E2 ubiquitin-conjugating enzyme]-L-cysteine + N(6)-ubiquitinyl-[acceptor protein]-L-lysine.. It participates in protein modification; protein ubiquitination. Its function is as follows. E3 ubiquitin-protein ligase that promotes the ubiquitination and proteasomal degradation of SIN3B. Independently of its E3 ligase activity, acts as a CTNNB1 stabilizer through USP7-mediated deubiquitination of CTNNB1 and promotes Wnt signaling. Plays a critical role in the regulation of nuclear lamina. This is E3 ubiquitin-protein ligase RNF220 (RNF220) from Macaca fascicularis (Crab-eating macaque).